A 25-amino-acid polypeptide reads, in one-letter code: GILKKFMLHRGTKVYKMRTLSKRSH.

As to expression, expressed by the venom gland.

The protein localises to the secreted. In terms of biological role, antimicrobial peptide against both Gram-positive, -negative and yeast. Also induces histamine release by mast cells and shows moderate hemolytic activities against both human and rabbit red cells. In Scolopendra mutilans (Chinese red-headed centipede), this protein is Antimicrobial peptide scolopin-2.